A 129-amino-acid chain; its full sequence is Small ribosomal subunit protein uS11 (129 aa).

Belongs to the universal ribosomal protein uS11 family. In terms of assembly, part of the 30S ribosomal subunit. Interacts with proteins S7 and S18. Binds to IF-3.

In terms of biological role, located on the platform of the 30S subunit, it bridges several disparate RNA helices of the 16S rRNA. Forms part of the Shine-Dalgarno cleft in the 70S ribosome. This Allorhizobium ampelinum (strain ATCC BAA-846 / DSM 112012 / S4) (Agrobacterium vitis (strain S4)) protein is Small ribosomal subunit protein uS11.